The sequence spans 490 residues: Colicin-5 (490 aa).

Residues 1-20 show a composition bias toward polar residues; it reads MDKVTDNSPDVESTESTEGS. Disordered regions lie at residues 1-29 and 146-171; these read MDKVTDNSPDVESTESTEGSFPTVGVDTG and QKAREEAEAAEKALREAERQRDEIAR. Residues 146–170 show a composition bias toward basic and acidic residues; the sequence is QKAREEAEAAEKALREAERQRDEIA. Residues 447-467 traverse the membrane as a helical segment; sequence IVALMFSFIVGVPLGFWGIAI.

This sequence belongs to the channel forming colicin family.

It localises to the host membrane. Functionally, this colicin is a channel-forming colicin. This class of transmembrane toxins depolarize the cytoplasmic membrane, leading to dissipation of cellular energy. Colicins are polypeptide toxins produced by and active against E.coli and closely related bacteria. This chain is Colicin-5 (cfa), found in Escherichia coli.